The following is a 652-amino-acid chain: Nucleolar GTP-binding protein 1 (652 aa).

Residues 169–341 (RTIIICGFPN…VKTEACERLL (173 aa)) enclose the OBG-type G domain. Residues 175 to 182 (GFPNVGKS), 221 to 225 (DTPGI), and 289 to 292 (NKID) contribute to the GTP site. A disordered region spans residues 501-521 (RLSSRKNKPVIPRNKQPKVRD).

It belongs to the TRAFAC class OBG-HflX-like GTPase superfamily. OBG GTPase family. NOG subfamily.

The protein resides in the nucleus. Its subcellular location is the nucleolus. Its function is as follows. Involved in the biogenesis of the 60S ribosomal subunit. Required for normal assembly of the mitotic spindle. May be involved in both centrosome-dependent and centrosome-independent spindle assembly programs. Acts as a TP53 repressor, preventing TP53 stabilization and cell cycle arrest. The chain is Nucleolar GTP-binding protein 1 from Drosophila melanogaster (Fruit fly).